A 418-amino-acid polypeptide reads, in one-letter code: D-inositol 3-phosphate glycosyltransferase (418 aa).

Residue histidine 9 participates in 1D-myo-inositol 3-phosphate binding. UDP-N-acetyl-alpha-D-glucosamine-binding positions include 15-16 and glycine 23; that span reads QP. 1D-myo-inositol 3-phosphate-binding positions include 20–25, lysine 78, tyrosine 110, threonine 134, and arginine 154; that span reads DSGGMN. 3 residues coordinate UDP-N-acetyl-alpha-D-glucosamine: arginine 231, lysine 236, and arginine 294. Mg(2+) is bound by residues tyrosine 303, arginine 304, and alanine 306. UDP-N-acetyl-alpha-D-glucosamine contacts are provided by glutamate 316 and glutamate 324. Position 330 (threonine 330) interacts with Mg(2+).

It belongs to the glycosyltransferase group 1 family. MshA subfamily. In terms of assembly, homodimer.

It catalyses the reaction 1D-myo-inositol 3-phosphate + UDP-N-acetyl-alpha-D-glucosamine = 1D-myo-inositol 2-acetamido-2-deoxy-alpha-D-glucopyranoside 3-phosphate + UDP + H(+). Catalyzes the transfer of a N-acetyl-glucosamine moiety to 1D-myo-inositol 3-phosphate to produce 1D-myo-inositol 2-acetamido-2-deoxy-glucopyranoside 3-phosphate in the mycothiol biosynthesis pathway. This Corynebacterium glutamicum (strain R) protein is D-inositol 3-phosphate glycosyltransferase.